The chain runs to 687 residues: MTAQSLLQMTLFLLSLLFLVQGAHGRGHREDFRFCSQRNQTHKSSLHYKATQDLRISIENSEEALTVHAPFPAAHPASQSFPDPRGLYHFCLYWNRHAGRLHLLYGKHDFLLSDKASSLLCFQHQEESLAQGPPLLATSVTSWWSPQNISLPSAASFTFSFHSPSHTAAHNASVDMCELKRDLQLLSQFLKHPQKASRRPSAAPASQQLQSLESKLTSVRFMGDTVSFEEDRINATVWKLQPTAGLQDLHIHSRQEEEQSEILEYSVLLPRTLFQRTKGRRGEAEKRLLLVDFSSQALFQDKNASQVLGEKVLGIVVQNTKVANLTEPVVLTFQHQLQPKNVTLQCVFWVEDPTLSSPGHWSSAGCETVRRETQTSCFCNHLTYFAVLMVSSVEVDAVHKHYLSLLSYVGCVISALACVVTIAAYLCSRRKPRDYTIKVHMNLLLAVFLLDMSFLLSEPVALTGSEAGCRAGAIFLHFSLLACLSWMGLEGYNLYRLVVEVFGTYVPGYLLKLSAMGWGFPIFLVTLVALVDVDNYGPIILAVHRTPESVIYPSMCWIRDSLVSYVTNLGLFSLVFLFNMAMLGTMVVQILRLRPHTQKWSHVLTLLGLSLVLGLPWALIFFSFASGTFQLVVLYLFSIITSFQGFLIFIWYWSMRLQARGGPSPLKSNSDSARLPISSGSTSSSRI.

The N-terminal stretch at 1–25 (MTAQSLLQMTLFLLSLLFLVQGAHG) is a signal peptide. 26–33 (RGHREDFR) lines the heparin pocket. Over 26-402 (RGHREDFRFC…VEVDAVHKHY (377 aa)) the chain is Extracellular. Disulfide bonds link cysteine 35–cysteine 91 and cysteine 121–cysteine 177. N-linked (GlcNAc...) asparagine glycosylation is found at asparagine 39, asparagine 148, and asparagine 171. 190 to 200 (LKHPQKASRRP) contacts heparin. The GAIN-B domain occupies 224 to 395 (DTVSFEEDRI…AVLMVSSVEV (172 aa)). Asparagine 234, asparagine 303, asparagine 324, and asparagine 341 each carry an N-linked (GlcNAc...) asparagine glycan. Cystine bridges form between cysteine 346-cysteine 377 and cysteine 366-cysteine 379. The GPS stretch occupies residues 346-395 (CVFWVEDPTLSSPGHWSSAGCETVRRETQTSCFCNHLTYFAVLMVSSVEV). The interval 384–397 (YFAVLMVSSVEVDA) is stachel. Residues 403–423 (LSLLSYVGCVISALACVVTIA) form a helical membrane-spanning segment. Residues 424–442 (AYLCSRRKPRDYTIKVHMN) lie on the Cytoplasmic side of the membrane. Residues 443–463 (LLLAVFLLDMSFLLSEPVALT) form a helical membrane-spanning segment. The Extracellular portion of the chain corresponds to 464–470 (GSEAGCR). A helical transmembrane segment spans residues 471-491 (AGAIFLHFSLLACLSWMGLEG). Residues 492 to 512 (YNLYRLVVEVFGTYVPGYLLK) lie on the Cytoplasmic side of the membrane. The helical transmembrane segment at 513–533 (LSAMGWGFPIFLVTLVALVDV) threads the bilayer. The Extracellular segment spans residues 534 to 570 (DNYGPIILAVHRTPESVIYPSMCWIRDSLVSYVTNLG). The chain crosses the membrane as a helical span at residues 571 to 591 (LFSLVFLFNMAMLGTMVVQIL). Residues 592-603 (RLRPHTQKWSHV) are Cytoplasmic-facing. A helical membrane pass occupies residues 604–624 (LTLLGLSLVLGLPWALIFFSF). Topologically, residues 625–630 (ASGTFQ) are extracellular. Residues 631–651 (LVVLYLFSIITSFQGFLIFIW) traverse the membrane as a helical segment. The Cytoplasmic segment spans residues 652–687 (YWSMRLQARGGPSPLKSNSDSARLPISSGSTSSSRI). The tract at residues 664 to 687 (SPLKSNSDSARLPISSGSTSSSRI) is disordered. The span at 678 to 687 (SSGSTSSSRI) shows a compositional bias: low complexity.

The protein belongs to the G-protein coupled receptor 2 family. LN-TM7 subfamily. As to quaternary structure, heterodimer of 2 chains generated by proteolytic processing; the large extracellular N-terminal fragment (ADGRG1 NT) and the membrane-bound C-terminal fragment (ADGRG1-CT) predominantly remain associated and non-covalently linked. ADGRG1 NT self-associates in a trans-trans manner; the homophilic interaction enhances receptor signaling. Interacts with TGM2. Interacts with heparin; leading to the reduction of ADGRG1 shedding. Interacts with COL3A1. Part of a GPCR-tetraspanin complex at least consisting of ADGRG1, CD81, eventually CD9, and GNA11 in which CD81 is enhancing the association of ADGRG1 with GNA11. Autoproteolytically cleaved into 2 fragments; the large extracellular N-terminal fragment (ADGRG1 NT) and the membrane-bound C-terminal fragment (ADGRG1 CT) predominantly remain associated and non-covalently linked. Shedding to yield the secreted ADGRG1 N-terminal fragment seems to involve metalloprotease(s). Post-translationally, ubiquitinated. Undergoes polyubiquitination upon activation.

It is found in the cell membrane. Its subcellular location is the secreted. The protein localises to the membrane raft. With respect to regulation, forms a heterodimer of 2 chains generated by proteolytic processing that remain associated through non-covalent interactions mediated by the GAIN-B domain. In the inactivated receptor, the Stachel sequence (also named stalk) is embedded in the GAIN-B domain, where it adopts a beta-strand conformation. On activation, the Stachel moves into the 7 transmembrane region and adopts a twisted hook-shaped configuration that forms contacts within the receptor, leading to coupling of a G-alpha protein, which activates signaling. The cleaved GAIN-B and N-terminal domains can then dissociate from the rest of the receptor. Its function is as follows. Adhesion G-protein coupled receptor (aGPCR) for steroid hormone 17alpha-hydroxypregnenolone (17-OH), which is involved in cell adhesion and cell-cell interactions. Ligand binding causes a conformation change that triggers signaling via guanine nucleotide-binding proteins (G proteins) and modulates the activity of downstream effectors, such as RhoA pathway. ADGRG1 is coupled to G(12) and/or G(13) G proteins (GNA12 and GNA13, respectively) and mediates the activation Rho small GTPases. Acts as a potent suppressor of ferroptosis: binding to 17-OH-binding initiates signaling that down-regulates CD36 and alleviates ferroptosis-induced liver injury. Ligand-binding also induces cell adhesion activity via association with proteins such as collagen III/COL3A1 and TGM2. Mediates cell matrix adhesion in developing neurons and hematopoietic stem cells. Involved in cortical development, specifically in maintenance of the pial basement membrane integrity and in cortical lamination: association with COL3A1 in the developing brain inhibits neuronal migration via activation of the RhoA pathway. Together with TGM2, acts as a regulator of myelination and myelin repair in oligodendrocyte precursor cells. Acts as a hemostatic sensor of shear force: G protein-coupled receptor signaling is activated in response to shear force in platelets, promoting G(13) G protein signaling, and platelet shape change and aggregation in a COL3A1-dependent manner. Acts as an inhibitor of VEGFA production thereby inhibiting angiogenesis through a signaling pathway mediated by PRKCA. Plays a role in the maintenance of hematopoietic stem cells in bone marrow niche. Plays an essential role in testis development. This chain is Adhesion G-protein coupled receptor G1 (ADGRG1), found in Pongo pygmaeus (Bornean orangutan).